A 303-amino-acid chain; its full sequence is Recombination-associated protein RdgC (303 aa).

The protein belongs to the RdgC family.

Its subcellular location is the cytoplasm. The protein resides in the nucleoid. Its function is as follows. May be involved in recombination. This Salmonella newport (strain SL254) protein is Recombination-associated protein RdgC.